The primary structure comprises 201 residues: RILP-like protein 2 (201 aa).

The region spanning G14 to G108 is the RH1 domain. Positions L67 to S155 form a coiled coil. Residues R121 to Q197 form the RH2 domain. Residues S177–T201 are disordered. Basic and acidic residues predominate over residues R179–T188.

This sequence belongs to the RILPL family.

The protein resides in the cytoplasm. Its subcellular location is the cytosol. It localises to the cytoskeleton. It is found in the microtubule organizing center. The protein localises to the centrosome. The protein resides in the cell projection. Its subcellular location is the cilium. Functionally, involved in cell shape and neuronal morphogenesis, positively regulating the establishment and maintenance of dendritic spines. Plays a role in cellular protein transport. This Xenopus tropicalis (Western clawed frog) protein is RILP-like protein 2 (rilpl2).